The primary structure comprises 296 residues: Methylsterol monooxygenase erg25B (296 aa).

A run of 3 helical transmembrane segments spans residues 50–70, 98–118, and 125–145; these read IMSFVMHEIVYFGRSVPWILI, FVLLSHFTVELPQIWLFHPMA, and TSVPFPSVWTMMYQIAIFFVL. A Fatty acid hydroxylase domain is found at 140–276; the sequence is AIFFVLEDTW…FRWWDYLLDT (137 aa). A Histidine box-1 motif is present at residues 154-158; that stretch reads HRALH. Positions 167 to 171 match the Histidine box-2 motif; that stretch reads HKIHH. Residues 201–221 form a helical membrane-spanning segment; the sequence is ILWCALTGDLHIFTMYVWIVL. The Histidine box-3 signature appears at 251–257; sequence HHDLHHE.

It belongs to the sterol desaturase family. Fe cation serves as cofactor.

The protein resides in the endoplasmic reticulum membrane. It participates in steroid metabolism; ergosterol biosynthesis. Sterol-C4-methyl oxidase; part of the third module of ergosterol biosynthesis pathway that includes the late steps of the pathway. Erg25B is a catalytic component of the C-4 demethylation complex that catalyzes the conversion of 4,4-dimethylfecosterol into fecosterol via 4-methylfecosterol. The third module or late pathway involves the ergosterol synthesis itself through consecutive reactions that mainly occur in the endoplasmic reticulum (ER) membrane. Firstly, the squalene synthase erg9 catalyzes the condensation of 2 farnesyl pyrophosphate moieties to form squalene, which is the precursor of all steroids. Squalene synthase is crucial for balancing the incorporation of farnesyl diphosphate (FPP) into sterol and nonsterol isoprene synthesis. Secondly, squalene is converted into lanosterol by the consecutive action of the squalene epoxidase erg1 and the lanosterol synthase erg7. Then, the delta(24)-sterol C-methyltransferase erg6 methylates lanosterol at C-24 to produce eburicol. Eburicol is the substrate of the sterol 14-alpha demethylase encoded by cyp51A and cyp51B, to yield 4,4,24-trimethyl ergosta-8,14,24(28)-trienol. The C-14 reductase erg24 then reduces the C14=C15 double bond which leads to 4,4-dimethylfecosterol. A sequence of further demethylations at C-4, involving the C-4 demethylation complex containing the C-4 methylsterol oxidases erg25A or erg25B, the sterol-4-alpha-carboxylate 3-dehydrogenase erg26 and the 3-keto-steroid reductase erg27, leads to the production of fecosterol via 4-methylfecosterol. The C-8 sterol isomerase erg2 then catalyzes the reaction which results in unsaturation at C-7 in the B ring of sterols and thus converts fecosterol to episterol. The sterol-C5-desaturase erg3B then catalyzes the introduction of a C-5 double bond in the B ring to produce 5-dehydroepisterol. The 2 other sterol-C5-desaturases, erg3A and erg3C, seem to be less important in ergosterol biosynthesis. The C-22 sterol desaturase erg5 further converts 5-dehydroepisterol into ergosta-5,7,22,24(28)-tetraen-3beta-ol by forming the C-22(23) double bond in the sterol side chain. Finally, ergosta-5,7,22,24(28)-tetraen-3beta-ol is substrate of the C-24(28) sterol reductases erg4A and erg4B to produce ergosterol. Possible alternative sterol biosynthetic pathways might exist from fecosterol to ergosterol, depending on the activities of the erg3 isoforms. This chain is Methylsterol monooxygenase erg25B, found in Aspergillus fumigatus (strain ATCC MYA-4609 / CBS 101355 / FGSC A1100 / Af293) (Neosartorya fumigata).